Reading from the N-terminus, the 919-residue chain is Synphilin-1 (919 aa).

Disordered stretches follow at residues 80 to 99 (SPLK…DQKN), 108 to 140 (GGES…STSL), and 287 to 313 (SSAA…EERS). The span at 299 to 308 (SGLNRTSSQG) shows a compositional bias: polar residues. ANK repeat units lie at residues 349-380 (NGNN…CLNE), 384-413 (EKLT…AIAE), 419-448 (DFPS…EQGI), and 456-485 (DGNS…NVTM). A coiled-coil region spans residues 515 to 552 (CMSLASQVVKLTKQLKEQTVERVTLQNQLQQFLEAQKS). Disordered stretches follow at residues 549 to 615 (AQKS…KDED), 666 to 713 (RLRQ…SMDS), and 728 to 919 (SGGR…NKAA). Residues 555–571 (KSLPSSPSSPSSPASRK) show a composition bias toward low complexity. The ANK 5 repeat unit spans residues 603 to 632 (ASSRARPKAKDEDSDKILRQLLGKEISENV). A compositionally biased stretch (low complexity) spans 667–685 (LRQLMQRSLSESDTDSNNS). Residues 686–700 (EDPKTTPVRKADRPR) show a composition bias toward basic and acidic residues. The stretch at 699–729 (PRPQPIVESVESMDSAESLHLMIKKHTLASG) is one ANK 6 repeat. Residues 774–785 (PSGDPQQPSPDS) show a composition bias toward low complexity. The segment covering 833–842 (NGEKDKDKGR) has biased composition (basic and acidic residues). The segment covering 844–854 (LQRTSTSNESG) has biased composition (polar residues). The span at 874–886 (NQNNNNNYQAANQ) shows a compositional bias: low complexity.

As to quaternary structure, homodimer. Heterodimer of isoform 1 and isoform 2. Interacts with SIAH1, SIAH2, SNCA, RNF19A and PRKN. Isoform 2 has a strong tendency to form aggregates and can sequester isoform 1. Ubiquitinated; mediated by SIAH1, SIAH2 or RNF19A and leading to its subsequent proteasomal degradation. In the absence of proteasomal degradation, ubiquitinated SNCAIP accumulates in cytoplasmic inclusion bodies. Isoform 2 is subject to limited ubiquitination that does not lead to proteasomal degradation. Detected in brain (at protein level). Widely expressed, with highest levels in brain, heart and placenta.

The protein resides in the cytoplasm. Its function is as follows. Isoform 2 inhibits the ubiquitin ligase activity of SIAH1 and inhibits proteasomal degradation of target proteins. Isoform 2 inhibits autoubiquitination and proteasomal degradation of SIAH1, and thereby increases cellular levels of SIAH. Isoform 2 modulates SNCA monoubiquitination by SIAH1. This chain is Synphilin-1 (SNCAIP), found in Homo sapiens (Human).